A 347-amino-acid polypeptide reads, in one-letter code: 4-hydroxy-2-oxovalerate aldolase 1 (347 aa).

One can recognise a Pyruvate carboxyltransferase domain in the interval 11-263 (VVLHDMCLRD…ETGVDLFKLM (253 aa)). 19–20 (RD) contributes to the substrate binding site. D20 is a Mn(2+) binding site. H23 acts as the Proton acceptor in catalysis. Positions 173 and 202 each coordinate substrate. 2 residues coordinate Mn(2+): H202 and H204. Y293 contacts substrate.

This sequence belongs to the 4-hydroxy-2-oxovalerate aldolase family.

It catalyses the reaction (S)-4-hydroxy-2-oxopentanoate = acetaldehyde + pyruvate. This Azoarcus sp. (strain BH72) protein is 4-hydroxy-2-oxovalerate aldolase 1 (lapG).